A 116-amino-acid chain; its full sequence is UPF0102 protein Sala_0262 (116 aa).

It belongs to the UPF0102 family.

The polypeptide is UPF0102 protein Sala_0262 (Sphingopyxis alaskensis (strain DSM 13593 / LMG 18877 / RB2256) (Sphingomonas alaskensis)).